The following is a 96-amino-acid chain: Co-chaperonin GroES (96 aa).

It belongs to the GroES chaperonin family. As to quaternary structure, heptamer of 7 subunits arranged in a ring. Interacts with the chaperonin GroEL.

It is found in the cytoplasm. In terms of biological role, together with the chaperonin GroEL, plays an essential role in assisting protein folding. The GroEL-GroES system forms a nano-cage that allows encapsulation of the non-native substrate proteins and provides a physical environment optimized to promote and accelerate protein folding. GroES binds to the apical surface of the GroEL ring, thereby capping the opening of the GroEL channel. The protein is Co-chaperonin GroES of Haemophilus influenzae (strain PittGG).